Reading from the N-terminus, the 400-residue chain is Argininosuccinate synthase (400 aa).

9-17 (AYSGGLDTS) lines the ATP pocket. Tyr87 is a binding site for L-citrulline. Gly117 provides a ligand contact to ATP. Positions 119, 123, and 124 each coordinate L-aspartate. An L-citrulline-binding site is contributed by Asn123. Residues Arg127, Ser176, Ser185, Glu261, and Tyr273 each coordinate L-citrulline.

This sequence belongs to the argininosuccinate synthase family. Type 1 subfamily. In terms of assembly, homotetramer.

The protein localises to the cytoplasm. The catalysed reaction is L-citrulline + L-aspartate + ATP = 2-(N(omega)-L-arginino)succinate + AMP + diphosphate + H(+). It functions in the pathway amino-acid biosynthesis; L-arginine biosynthesis; L-arginine from L-ornithine and carbamoyl phosphate: step 2/3. This is Argininosuccinate synthase from Chlorobium phaeobacteroides (strain DSM 266 / SMG 266 / 2430).